We begin with the raw amino-acid sequence, 903 residues long: DNA mismatch repair protein MutS (903 aa).

ATP is bound at residue 655–662 (GPNMAGKS).

It belongs to the DNA mismatch repair MutS family.

Its function is as follows. This protein is involved in the repair of mismatches in DNA. It is possible that it carries out the mismatch recognition step. This protein has a weak ATPase activity. This Caulobacter vibrioides (strain ATCC 19089 / CIP 103742 / CB 15) (Caulobacter crescentus) protein is DNA mismatch repair protein MutS.